The primary structure comprises 445 residues: Exodeoxyribonuclease 7 large subunit (445 aa).

The protein belongs to the XseA family. As to quaternary structure, heterooligomer composed of large and small subunits.

The protein localises to the cytoplasm. It carries out the reaction Exonucleolytic cleavage in either 5'- to 3'- or 3'- to 5'-direction to yield nucleoside 5'-phosphates.. Functionally, bidirectionally degrades single-stranded DNA into large acid-insoluble oligonucleotides, which are then degraded further into small acid-soluble oligonucleotides. The chain is Exodeoxyribonuclease 7 large subunit from Pasteurella multocida (strain Pm70).